Reading from the N-terminus, the 175-residue chain is Putative adenylate cyclase MJ0240 (175 aa).

One can recognise a CYTH domain in the interval 1-175 (MIEVEIKVKI…RKSYLELRGL (175 aa)). Catalysis depends on Tyr-37, which acts as the Proton acceptor.

It belongs to the adenylyl cyclase CyaB family.

Its subcellular location is the cytoplasm. The catalysed reaction is ATP = 3',5'-cyclic AMP + diphosphate. Functionally, could catalyze the biosynthesis of cyclic AMP (cAMP) from ATP. The chain is Putative adenylate cyclase MJ0240 from Methanocaldococcus jannaschii (strain ATCC 43067 / DSM 2661 / JAL-1 / JCM 10045 / NBRC 100440) (Methanococcus jannaschii).